The following is an 89-amino-acid chain: GTP cyclohydrolase 1 feedback regulatory protein (89 aa).

The protein belongs to the GFRP family. In terms of assembly, homopentamer. Forms a complex with GCH1 where a GCH1 homodecamer is sandwiched by two GFRP homopentamers.

Its subcellular location is the nucleus. It is found in the nucleus membrane. It localises to the cytoplasm. The protein localises to the cytosol. Its function is as follows. Mediates tetrahydrobiopterin inhibition of GTP cyclohydrolase 1. This chain is GTP cyclohydrolase 1 feedback regulatory protein (gchfr), found in Danio rerio (Zebrafish).